Consider the following 338-residue polypeptide: Fructose-1,6-bisphosphatase class 1 (338 aa).

Glutamate 92, aspartate 115, leucine 117, and aspartate 118 together coordinate Mg(2+). Substrate is bound by residues 118–121 (DGSS), asparagine 211, tyrosine 244, 262–264 (YLY), and lysine 274. Mg(2+) is bound at residue glutamate 280.

It belongs to the FBPase class 1 family. In terms of assembly, homotetramer. Mg(2+) serves as cofactor.

The protein resides in the cytoplasm. It carries out the reaction beta-D-fructose 1,6-bisphosphate + H2O = beta-D-fructose 6-phosphate + phosphate. It participates in carbohydrate biosynthesis; gluconeogenesis. The chain is Fructose-1,6-bisphosphatase class 1 from Vibrio parahaemolyticus serotype O3:K6 (strain RIMD 2210633).